We begin with the raw amino-acid sequence, 110 residues long: UPF0060 membrane protein Pfl01_4105 (110 aa).

A run of 4 helical transmembrane segments spans residues 5 to 25 (LWFF…WMWL), 28 to 48 (GKSA…ALLL), 59 to 79 (AYAA…AVVE), and 84 to 104 (LGSD…ILFG).

The protein belongs to the UPF0060 family.

Its subcellular location is the cell inner membrane. The polypeptide is UPF0060 membrane protein Pfl01_4105 (Pseudomonas fluorescens (strain Pf0-1)).